We begin with the raw amino-acid sequence, 582 residues long: Putative phospholipase B-like 2 (582 aa).

Residues 1 to 42 (MTRLIRSKKQFLIRSLHSVFYYLGSLLHSTFEMNVFIGLLLA) form the signal peptide. N-linked (GlcNAc...) asparagine glycosylation is found at Asn91, Asn141, Asn178, Asn224, and Asn318. Cys139 and Cys146 are joined by a disulfide. An intrachain disulfide couples Cys480 to Cys482. The N-linked (GlcNAc...) asparagine glycan is linked to Asn502.

The protein belongs to the phospholipase B-like family.

Its subcellular location is the secreted. Its function is as follows. Putative phospholipase. The sequence is that of Putative phospholipase B-like 2 from Caenorhabditis elegans.